A 128-amino-acid polypeptide reads, in one-letter code: Small ribosomal subunit protein uS11 (128 aa).

Belongs to the universal ribosomal protein uS11 family. Part of the 30S ribosomal subunit. Interacts with proteins S7 and S18. Binds to IF-3.

Functionally, located on the platform of the 30S subunit, it bridges several disparate RNA helices of the 16S rRNA. Forms part of the Shine-Dalgarno cleft in the 70S ribosome. This chain is Small ribosomal subunit protein uS11, found in Wolbachia sp. subsp. Drosophila simulans (strain wRi).